Reading from the N-terminus, the 370-residue chain is tRNA-specific 2-thiouridylase MnmA (370 aa).

ATP-binding positions include 6 to 13 (AMSGGVDS) and leucine 32. Residue cysteine 101 is the Nucleophile of the active site. The cysteines at positions 101 and 193 are disulfide-linked. Glycine 125 serves as a coordination point for ATP. Positions 143–145 (KDQ) are interaction with tRNA. Cysteine 193 serves as the catalytic Cysteine persulfide intermediate.

The protein belongs to the MnmA/TRMU family.

It localises to the cytoplasm. It carries out the reaction S-sulfanyl-L-cysteinyl-[protein] + uridine(34) in tRNA + AH2 + ATP = 2-thiouridine(34) in tRNA + L-cysteinyl-[protein] + A + AMP + diphosphate + H(+). Functionally, catalyzes the 2-thiolation of uridine at the wobble position (U34) of tRNA, leading to the formation of s(2)U34. In Rhodococcus erythropolis (strain PR4 / NBRC 100887), this protein is tRNA-specific 2-thiouridylase MnmA.